Consider the following 205-residue polypeptide: Urease accessory protein UreG (205 aa).

Residue 14-21 (GPVGSGKT) coordinates GTP.

In terms of assembly, homodimer. UreD, UreF and UreG form a complex that acts as a GTP-hydrolysis-dependent molecular chaperone, activating the urease apoprotein by helping to assemble the nickel containing metallocenter of UreC. The UreE protein probably delivers the nickel.

The protein localises to the cytoplasm. With respect to regulation, activation of apourease within the UreDFG-apoprotein complex is inhibited by zinc, copper and cobalt. Functionally, facilitates the functional incorporation of the urease nickel metallocenter. This process requires GTP hydrolysis, probably effectuated by UreG. This is Urease accessory protein UreG from Klebsiella aerogenes (Enterobacter aerogenes).